The sequence spans 57 residues: MPKTVFRKGETIEETLRRFKREVSKSGVLAEARRKEHYIKPSVQKKNRQKNMRSKKR.

The segment at 34–57 (RKEHYIKPSVQKKNRQKNMRSKKR) is disordered. Residues 43–57 (VQKKNRQKNMRSKKR) show a composition bias toward basic residues.

Belongs to the bacterial ribosomal protein bS21 family.

The polypeptide is Small ribosomal subunit protein bS21 (Aster yellows witches'-broom phytoplasma (strain AYWB)).